Consider the following 465-residue polypeptide: E3 ubiquitin-protein ligase TRIM15 (465 aa).

Residues 16 to 61 (CTLCVGPLEDAVTAPCGHTFCRLCLPTLSQMGAQSSGKILLCPLCQ) form an RING-type zinc finger. The segment at 78 to 119 (LGETYCEEHGEKIYFFCENDAEFLCVFCREGPTHQAHTVGFL) adopts a B box-type zinc-finger fold. Residues C83, H86, C105, and H111 each coordinate Zn(2+). Residues 126-229 (YRDRLRSRLE…VKELEEKCQQ (104 aa)) are a coiled coil. The region spanning 276–465 (EMMRMFSENL…KKGSCLTLKG (190 aa)) is the B30.2/SPRY domain.

The protein belongs to the TRIM/RBCC family. Interacts with paxillin/PXN; this interaction recruits TRIM15 to focal adhesions. Interacts with TRIM8; this interaction prevents TRIM8 cytoplasmic translocation.

The protein localises to the cytoplasm. It localises to the nucleus. Its subcellular location is the cell junction. It is found in the focal adhesion. The catalysed reaction is S-ubiquitinyl-[E2 ubiquitin-conjugating enzyme]-L-cysteine + [acceptor protein]-L-lysine = [E2 ubiquitin-conjugating enzyme]-L-cysteine + N(6)-ubiquitinyl-[acceptor protein]-L-lysine.. In terms of biological role, E3 ubiquitin ligase that plays a role in several processes including innate antiviral immnity, cell migration and chemotaxis. Acts as a 'Lys-63'-specific ubiquitin ligase for MAPK1/ERK2 and MAPK3/ERK1, promoting their activation by facilitating their interaction with MAP2K1 and MAP2K2. Also plays a role in cell migration and chemotaxis by acting as a stable focal adhesion component upon recruitment by multi-adapter protein paxillin/PXN. Functions in the RIGI-mediated interferon induction pathway upstream or at the level of MAVS. Inhibits NF-kappa-B activation by turnover of 'Lys-63'-linked ubiquitination of MAP3K7/TAK1. Mechanistically, prevents TRIM8 cytoplasmic translocation and thus inhibits TRIM8-mediated 'Lys-63'-linked polyubiquitination of MAP3K7/TAK1 in the cytoplasm. Also has an important regulatory effect on the activation of hepatic stellate cells (HSCs). This chain is E3 ubiquitin-protein ligase TRIM15 (TRIM15), found in Macaca mulatta (Rhesus macaque).